We begin with the raw amino-acid sequence, 347 residues long: 4-hydroxy-2-oxovalerate aldolase 1 (347 aa).

Positions 13–265 constitute a Pyruvate carboxyltransferase domain; it reads IRVTDTSLRD…KTGIDFFAIA (253 aa). Substrate is bound at residue 21–22; the sequence is RD. D22 is a binding site for Mn(2+). Catalysis depends on H25, which acts as the Proton acceptor. Positions 175 and 204 each coordinate substrate. The Mn(2+) site is built by H204 and H206. Position 295 (Y295) interacts with substrate.

This sequence belongs to the 4-hydroxy-2-oxovalerate aldolase family.

It carries out the reaction (S)-4-hydroxy-2-oxopentanoate = acetaldehyde + pyruvate. This is 4-hydroxy-2-oxovalerate aldolase 1 from Rhodococcus erythropolis (strain PR4 / NBRC 100887).